The primary structure comprises 87 residues: U3-theraphotoxin-Hhn1a 3 (87 aa).

Positions 1–24 (MVNMKASMFLTFAGLVLLFVVCYA) are cleaved as a signal peptide. Residues 25-52 (PESEEKEFPKEMLSSIFAVDNDFKQEER) constitute a propeptide that is removed on maturation. Disulfide bonds link C54/C67, C61/C72, and C66/C79.

This sequence belongs to the neurotoxin 10 (Hwtx-1) family. 51 (Hntx-8) subfamily. Hntx-8 sub-subfamily. As to expression, expressed by the venom gland.

It is found in the secreted. Functionally, ion channel inhibitor. In Cyriopagopus hainanus (Chinese bird spider), this protein is U3-theraphotoxin-Hhn1a 3.